The sequence spans 372 residues: 4-hydroxy-3-methylbut-2-en-1-yl diphosphate synthase (flavodoxin) (372 aa).

Residues Cys-270, Cys-273, Cys-305, and Glu-312 each coordinate [4Fe-4S] cluster.

The protein belongs to the IspG family. It depends on [4Fe-4S] cluster as a cofactor.

The catalysed reaction is (2E)-4-hydroxy-3-methylbut-2-enyl diphosphate + oxidized [flavodoxin] + H2O + 2 H(+) = 2-C-methyl-D-erythritol 2,4-cyclic diphosphate + reduced [flavodoxin]. Its pathway is isoprenoid biosynthesis; isopentenyl diphosphate biosynthesis via DXP pathway; isopentenyl diphosphate from 1-deoxy-D-xylulose 5-phosphate: step 5/6. Converts 2C-methyl-D-erythritol 2,4-cyclodiphosphate (ME-2,4cPP) into 1-hydroxy-2-methyl-2-(E)-butenyl 4-diphosphate. The sequence is that of 4-hydroxy-3-methylbut-2-en-1-yl diphosphate synthase (flavodoxin) from Salmonella choleraesuis (strain SC-B67).